Consider the following 2278-residue polypeptide: Protein Ycf2 (2278 aa).

1632–1639 (GSIGTGRS) lines the ATP pocket.

It belongs to the Ycf2 family.

It is found in the plastid. The protein localises to the chloroplast stroma. Probable ATPase of unknown function. Its presence in a non-photosynthetic plant (Epifagus virginiana) and experiments in tobacco indicate that it has an essential function which is probably not related to photosynthesis. This chain is Protein Ycf2, found in Solanum bulbocastanum (Wild potato).